The following is a 263-amino-acid chain: MINVEYKHTQVAAKKKLGQNFLTDRNITRKTVLLSGAKPDDQVVEIGPGFGALTRELVEECHNLTVIEKDPTLATFIRNEYPQIKVIEGDVLTINFSAMAQAGKPLQILGNIPYSITSPILFHLLEHRRAFRSATLMMQHEVALRLAAKPATKEYGILAVQMQAFCKVEYLFKVSRKVFKPQPKVESAVIKLTPHATDPALDADGFRRFVRIAFHQRRKTLLNNLKESYNLELVDSNKLQLRAEALSIEELLELFSLIKTKSE.

Positions 20, 22, 47, 68, 90, and 111 each coordinate S-adenosyl-L-methionine.

This sequence belongs to the class I-like SAM-binding methyltransferase superfamily. rRNA adenine N(6)-methyltransferase family. RsmA subfamily.

The protein localises to the cytoplasm. The enzyme catalyses adenosine(1518)/adenosine(1519) in 16S rRNA + 4 S-adenosyl-L-methionine = N(6)-dimethyladenosine(1518)/N(6)-dimethyladenosine(1519) in 16S rRNA + 4 S-adenosyl-L-homocysteine + 4 H(+). Its function is as follows. Specifically dimethylates two adjacent adenosines (A1518 and A1519) in the loop of a conserved hairpin near the 3'-end of 16S rRNA in the 30S particle. May play a critical role in biogenesis of 30S subunits. The chain is Ribosomal RNA small subunit methyltransferase A from Chlorobium chlorochromatii (strain CaD3).